The chain runs to 427 residues: Enolase (427 aa).

Q163 contributes to the (2R)-2-phosphoglycerate binding site. The active-site Proton donor is E205. Mg(2+)-binding residues include D242, E285, and D312. K337, R366, S367, and K388 together coordinate (2R)-2-phosphoglycerate. The Proton acceptor role is filled by K337.

Belongs to the enolase family. It depends on Mg(2+) as a cofactor.

It localises to the cytoplasm. Its subcellular location is the secreted. The protein localises to the cell surface. It carries out the reaction (2R)-2-phosphoglycerate = phosphoenolpyruvate + H2O. The protein operates within carbohydrate degradation; glycolysis; pyruvate from D-glyceraldehyde 3-phosphate: step 4/5. Catalyzes the reversible conversion of 2-phosphoglycerate (2-PG) into phosphoenolpyruvate (PEP). It is essential for the degradation of carbohydrates via glycolysis. In Bradyrhizobium sp. (strain ORS 278), this protein is Enolase.